Here is a 282-residue protein sequence, read N- to C-terminus: Phospholipid phosphatase 1 (282 aa).

The Cytoplasmic portion of the chain corresponds to 1-6; sequence MFDKPR. The PDZ-binding; involved in localization to the apical cell membrane motif lies at 5-7; that stretch reads PRL. The chain crosses the membrane as a helical span at residues 7-27; it reads LPYVVLDVICVLLAGLPFIIL. Over 28-53 the chain is Extracellular; the sequence is TSRHTPFQRGVFCTDESIKYPYREDT. A helical membrane pass occupies residues 54–74; the sequence is IPYALLGGIVIPFCIIVMITG. Topologically, residues 75-88 are cytoplasmic; sequence ETLSVYFNVLHSNS. Residues 89–109 form a helical membrane-spanning segment; the sequence is FVSNHYIATIYKAVGAFLFGA. Over 110–164 the chain is Extracellular; it reads SASQSLTDIAKYSIGRLRPHFLAVCNPDWSKINCSDGYIENFVCQGNEQKVREGR. The interval 120–128 is phosphatase sequence motif I; it reads KYSIGRLRP. N-linked (GlcNAc...) asparagine glycosylation occurs at Asn142. Residues 165–185 form a helical membrane-spanning segment; the sequence is LSFYSGHSSFSMYCMLFVALY. The tract at residues 168 to 171 is phosphatase sequence motif II; that stretch reads YSGH. The active-site Proton donors is His171. Residues 186-194 are Cytoplasmic-facing; it reads LQARMKGDW. The helical transmembrane segment at 195-215 threads the bilayer; the sequence is ARLLRPMLQFGLVALSIYVGL. Residues 216–227 form a phosphatase sequence motif III region; it reads SRVSDYKHHWSD. At 216–229 the chain is on the extracellular side; that stretch reads SRVSDYKHHWSDVL. Catalysis depends on His223, which acts as the Nucleophile. Residues 230-250 traverse the membrane as a helical segment; it reads IGLIQGAVVAILVVLYVTDFF. The Cytoplasmic segment spans residues 251 to 282; sequence KTTESNKERKEDSHTTLHETTNRQSYARNHEP. The span at 257 to 271 shows a compositional bias: basic and acidic residues; it reads KERKEDSHTTLHETT. The interval 257–282 is disordered; it reads KERKEDSHTTLHETTNRQSYARNHEP. Residues 272–282 are compositionally biased toward polar residues; it reads NRQSYARNHEP.

Belongs to the PA-phosphatase related phosphoesterase family. As to quaternary structure, forms functional homodimers and homooligomers that are not required for substrate recognition and catalytic activity. Can also form heterooligomers with PLPP2 and PLPP3. Post-translationally, N-glycosylated. N-linked sugars are of the complex type. N-glycosylation is not required for the phosphatase activity.

The protein localises to the cell membrane. It localises to the apical cell membrane. The protein resides in the membrane raft. Its subcellular location is the membrane. It is found in the caveola. It catalyses the reaction a 1,2-diacyl-sn-glycero-3-phosphate + H2O = a 1,2-diacyl-sn-glycerol + phosphate. It carries out the reaction 1,2-dihexadecanoyl-sn-glycero-3-phosphate + H2O = 1,2-dihexadecanoyl-sn-glycerol + phosphate. The catalysed reaction is 1,2-di-(9Z-octadecenoyl)-sn-glycero-3-phosphate + H2O = 1,2-di-(9Z-octadecenoyl)-sn-glycerol + phosphate. The enzyme catalyses a monoacyl-sn-glycero-3-phosphate + H2O = a monoacylglycerol + phosphate. It catalyses the reaction (9Z)-octadecenoyl-sn-glycero-3-phosphate + H2O = (9Z-octadecenoyl)-glycerol + phosphate. It carries out the reaction a 1-acyl-sn-glycero-3-phosphate + H2O = a 1-acyl-sn-glycerol + phosphate. The catalysed reaction is 1-(9Z-octadecenoyl)-sn-glycero-3-phosphate + H2O = 1-(9Z-octadecenoyl)-sn-glycerol + phosphate. The enzyme catalyses a 1,2-diacyl-sn-glycerol 3-diphosphate + H2O = a 1,2-diacyl-sn-glycero-3-phosphate + phosphate + H(+). It catalyses the reaction sphing-4-enine 1-phosphate + H2O = sphing-4-enine + phosphate. It carries out the reaction an N-acylsphing-4-enine 1-phosphate + H2O = an N-acylsphing-4-enine + phosphate. The catalysed reaction is N-(octanoyl)-sphing-4-enine-1-phosphate + H2O = N-octanoylsphing-4-enine + phosphate. The enzyme catalyses N-(9Z-octadecenoyl)-ethanolamine phosphate + H2O = N-(9Z-octadecenoyl) ethanolamine + phosphate. It catalyses the reaction 1-hexadecanoyl-2-(9Z-octadecenoyl)-sn-glycero-3-phosphate + H2O = 1-hexadecanoyl-2-(9Z-octadecenoyl)-sn-glycerol + phosphate. It participates in lipid metabolism; phospholipid metabolism. Its activity is regulated as follows. Magnesium-independent phospholipid phosphatase. Insensitive to N-ethylmaleimide. Functionally, magnesium-independent phospholipid phosphatase of the plasma membrane that catalyzes the dephosphorylation of a variety of glycerolipid and sphingolipid phosphate esters including phosphatidate/PA, lysophosphatidate/LPA, diacylglycerol pyrophosphate/DGPP, sphingosine 1-phosphate/S1P and ceramide 1-phosphate/C1P. Also acts on N-oleoyl ethanolamine phosphate/N-(9Z-octadecenoyl)-ethanolamine phosphate, a potential physiological compound. Through its extracellular phosphatase activity allows both the hydrolysis and the cellular uptake of these bioactive lipid mediators from the milieu, regulating signal transduction in different cellular processes. It is for instance essential for the extracellular hydrolysis of S1P and subsequent conversion into intracellular S1P. Involved in the regulation of inflammation, platelets activation, cell proliferation and migration among other processes. May also have an intracellular activity to regulate phospholipid-mediated signaling pathways. The protein is Phospholipid phosphatase 1 of Rattus norvegicus (Rat).